The following is a 415-amino-acid chain: Multifunctional CCA protein (415 aa).

The ATP site is built by Gly8 and Arg11. Positions 8 and 11 each coordinate CTP. Asp21 and Asp23 together coordinate Mg(2+). ATP contacts are provided by Arg91, Arg137, and Arg140. CTP contacts are provided by Arg91, Arg137, and Arg140. In terms of domain architecture, HD spans Thr228–Trp329.

Belongs to the tRNA nucleotidyltransferase/poly(A) polymerase family. Bacterial CCA-adding enzyme type 1 subfamily. As to quaternary structure, monomer. Can also form homodimers and oligomers. The cofactor is Mg(2+). It depends on Ni(2+) as a cofactor.

The catalysed reaction is a tRNA precursor + 2 CTP + ATP = a tRNA with a 3' CCA end + 3 diphosphate. The enzyme catalyses a tRNA with a 3' CCA end + 2 CTP + ATP = a tRNA with a 3' CCACCA end + 3 diphosphate. Catalyzes the addition and repair of the essential 3'-terminal CCA sequence in tRNAs without using a nucleic acid template. Adds these three nucleotides in the order of C, C, and A to the tRNA nucleotide-73, using CTP and ATP as substrates and producing inorganic pyrophosphate. tRNA 3'-terminal CCA addition is required both for tRNA processing and repair. Also involved in tRNA surveillance by mediating tandem CCA addition to generate a CCACCA at the 3' terminus of unstable tRNAs. While stable tRNAs receive only 3'-terminal CCA, unstable tRNAs are marked with CCACCA and rapidly degraded. The protein is Multifunctional CCA protein of Cronobacter sakazakii (strain ATCC BAA-894) (Enterobacter sakazakii).